Here is a 98-residue protein sequence, read N- to C-terminus: Small ribosomal subunit protein bS6 (98 aa).

The protein belongs to the bacterial ribosomal protein bS6 family.

Binds together with bS18 to 16S ribosomal RNA. The chain is Small ribosomal subunit protein bS6 from Moorella thermoacetica (strain ATCC 39073 / JCM 9320).